Reading from the N-terminus, the 397-residue chain is GTPase Obg (397 aa).

The region spanning M1 to L159 is the Obg domain. A disordered region spans residues S22–S44. The span at G33 to G43 shows a compositional bias: gly residues. Residues A160–E333 form the OBG-type G domain. Residues G166 to S173, F191 to V195, D213 to G216, N283 to D286, and S314 to V316 contribute to the GTP site. The Mg(2+) site is built by S173 and T193. Residues T359–D389 are disordered. Residues E361–D389 show a composition bias toward acidic residues.

This sequence belongs to the TRAFAC class OBG-HflX-like GTPase superfamily. OBG GTPase family. In terms of assembly, monomer. Mg(2+) is required as a cofactor.

The protein localises to the cytoplasm. Its function is as follows. An essential GTPase which binds GTP, GDP and possibly (p)ppGpp with moderate affinity, with high nucleotide exchange rates and a fairly low GTP hydrolysis rate. Plays a role in control of the cell cycle, stress response, ribosome biogenesis and in those bacteria that undergo differentiation, in morphogenesis control. The polypeptide is GTPase Obg (Pseudoalteromonas atlantica (strain T6c / ATCC BAA-1087)).